The following is a 384-amino-acid chain: Putative 8-amino-7-oxononanoate synthase (384 aa).

Arginine 22 provides a ligand contact to substrate. Residue 109–110 coordinates pyridoxal 5'-phosphate; that stretch reads GY. Histidine 134 serves as a coordination point for substrate. Pyridoxal 5'-phosphate is bound by residues serine 182, 207–210, and 236–239; these read DDAH and TLSK. Lysine 239 is modified (N6-(pyridoxal phosphate)lysine). Threonine 348 is a binding site for substrate.

The protein belongs to the class-II pyridoxal-phosphate-dependent aminotransferase family. BioF subfamily. Homodimer. The cofactor is pyridoxal 5'-phosphate.

The catalysed reaction is 6-carboxyhexanoyl-[ACP] + L-alanine + H(+) = (8S)-8-amino-7-oxononanoate + holo-[ACP] + CO2. Its pathway is cofactor biosynthesis; biotin biosynthesis. Functionally, catalyzes the decarboxylative condensation of pimeloyl-[acyl-carrier protein] and L-alanine to produce 8-amino-7-oxononanoate (AON), [acyl-carrier protein], and carbon dioxide. This Caulobacter vibrioides (strain ATCC 19089 / CIP 103742 / CB 15) (Caulobacter crescentus) protein is Putative 8-amino-7-oxononanoate synthase (bioF).